A 78-amino-acid polypeptide reads, in one-letter code: Large ribosomal subunit protein bL28 (78 aa).

A compositionally biased stretch (polar residues) spans 1–20 (MSRVCQLTGTRANNGMSVSH). Residues 1 to 23 (MSRVCQLTGTRANNGMSVSHSHI) are disordered.

It belongs to the bacterial ribosomal protein bL28 family.

The chain is Large ribosomal subunit protein bL28 from Prochlorococcus marinus (strain NATL2A).